A 3078-amino-acid polypeptide reads, in one-letter code: Probable polyketide synthase 44 (3078 aa).

The region spanning 10-435 (DNDVAIIGIG…GSNACLILTE (426 aa)) is the Ketosynthase family 3 (KS3) domain. Catalysis depends on for beta-ketoacyl synthase activity residues Cys-175, His-320, and His-358. Positions 627-660 (GILASISIGHSLGEVSSAVCSGMIDLETGCFIIY) are acyl/malonyl transferase. Ser-637 serves as the catalytic For acyl/malonyl transferase activity. The segment at 952–1072 (TNHLGYRNER…GRLSTTKHND (121 aa)) is N-terminal hotdog fold. In terms of domain architecture, PKS/mFAS DH spans 952-1239 (TNHLGYRNER…YTQLTPYKNQ (288 aa)). The active-site Proton acceptor; for dehydratase activity is His-984. The segment at 1088–1239 (NFVTIQKKEL…YTQLTPYKNQ (152 aa)) is C-terminal hotdog fold. Asp-1150 serves as the catalytic Proton donor; for dehydratase activity. Residues 2080-2119 (LENIKTDLSNKNDNNNNNNNNNNDNKESNIKELLDNDDDE) adopt a coiled-coil conformation. Residues 2087-2108 (LSNKNDNNNNNNNNNNDNKESN) form a disordered region. The segment covering 2090–2102 (KNDNNNNNNNNNN) has biased composition (low complexity). The Carrier domain maps to 2558–2636 (SDDLSIREQI…QLIQSVTDAM (79 aa)). At Ser-2596 the chain carries O-(pantetheine 4'-phosphoryl)serine. A helical transmembrane segment spans residues 2694–2714 (NTVFLTGSSGFIGIYILFYLI).

It depends on pantetheine 4'-phosphate as a cofactor.

The protein localises to the membrane. Functionally, probable polyketide synthase. The sequence is that of Probable polyketide synthase 44 (pks44) from Dictyostelium discoideum (Social amoeba).